A 291-amino-acid chain; its full sequence is Protease HtpX homolog (291 aa).

A run of 2 helical transmembrane segments spans residues 4–24 (IVLFLATNLAIVLVLSLTMRL) and 39–59 (TSLLIFAAVMGFGGSLISLAI). Zn(2+) is bound at residue His145. Glu146 is an active-site residue. Zn(2+) is bound at residue His149. The next 2 membrane-spanning stretches (helical) occupy residues 156-176 (VTLALIQGVVNTFVMFLSRII) and 195-215 (FFVTMIVAELVLGILASIIVM). Glu222 lines the Zn(2+) pocket.

It belongs to the peptidase M48B family. Zn(2+) is required as a cofactor.

It localises to the cell inner membrane. This is Protease HtpX homolog from Thiobacillus denitrificans (strain ATCC 25259 / T1).